We begin with the raw amino-acid sequence, 428 residues long: Serine--tRNA ligase (428 aa).

235 to 237 (TAE) provides a ligand contact to L-serine. 266–268 (RSE) contacts ATP. An L-serine-binding site is contributed by Glu289. ATP is bound at residue 353-356 (EISS). Ser389 lines the L-serine pocket.

The protein belongs to the class-II aminoacyl-tRNA synthetase family. Type-1 seryl-tRNA synthetase subfamily. Homodimer. The tRNA molecule binds across the dimer.

The protein resides in the cytoplasm. The enzyme catalyses tRNA(Ser) + L-serine + ATP = L-seryl-tRNA(Ser) + AMP + diphosphate + H(+). It catalyses the reaction tRNA(Sec) + L-serine + ATP = L-seryl-tRNA(Sec) + AMP + diphosphate + H(+). It participates in aminoacyl-tRNA biosynthesis; selenocysteinyl-tRNA(Sec) biosynthesis; L-seryl-tRNA(Sec) from L-serine and tRNA(Sec): step 1/1. Its function is as follows. Catalyzes the attachment of serine to tRNA(Ser). Is also able to aminoacylate tRNA(Sec) with serine, to form the misacylated tRNA L-seryl-tRNA(Sec), which will be further converted into selenocysteinyl-tRNA(Sec). This chain is Serine--tRNA ligase, found in Shewanella baltica (strain OS223).